We begin with the raw amino-acid sequence, 351 residues long: Probable inactive tRNA-specific adenosine deaminase-like protein 3 (351 aa).

Methionine 1 is modified (N-acetylmethionine). Residues 1 to 26 (MEPAPGLVEQPKCLEAGSPEPEPAPW) are disordered. One can recognise a CMP/dCMP-type deaminase domain in the interval 171–336 (AAMQSHMERA…PDLNHRFQVF (166 aa)). Zn(2+) contacts are provided by histidine 223, cysteine 291, and cysteine 294.

Belongs to the cytidine and deoxycytidylate deaminase family. ADAT3 subfamily. It depends on Zn(2+) as a cofactor.

The polypeptide is Probable inactive tRNA-specific adenosine deaminase-like protein 3 (ADAT3) (Homo sapiens (Human)).